Consider the following 234-residue polypeptide: MEVSRIGSFQEHIDKTTGIVTPHPLLRKPLMSQPRGIYLITPDETDTARLIARTAPLLNGIVWLQYRNKLANTALRTEQAQALLALCRQTGIPLLINDDLELAQTIGADGVHLGMHDSNPSIARAQLGPHAIIGVSCYNQIERAKQAIKAGASYVGFGTFYPSHTKTTPYRATPELLRQTTHLGVPRVAIGGLTPKNIAPIIEAGAELLAVISGIYSAKNPVTALKAYQSQFNI.

4-amino-2-methyl-5-(diphosphooxymethyl)pyrimidine is bound by residues 65 to 69 and asparagine 97; that span reads QYRNK. Aspartate 98 and aspartate 117 together coordinate Mg(2+). Serine 136 serves as a coordination point for 4-amino-2-methyl-5-(diphosphooxymethyl)pyrimidine. 163 to 165 is a 2-[(2R,5Z)-2-carboxy-4-methylthiazol-5(2H)-ylidene]ethyl phosphate binding site; it reads SHT. Lysine 166 is a binding site for 4-amino-2-methyl-5-(diphosphooxymethyl)pyrimidine. 2-[(2R,5Z)-2-carboxy-4-methylthiazol-5(2H)-ylidene]ethyl phosphate contacts are provided by residues glycine 192 and 212–213; that span reads IS.

The protein belongs to the thiamine-phosphate synthase family. It depends on Mg(2+) as a cofactor.

It carries out the reaction 2-[(2R,5Z)-2-carboxy-4-methylthiazol-5(2H)-ylidene]ethyl phosphate + 4-amino-2-methyl-5-(diphosphooxymethyl)pyrimidine + 2 H(+) = thiamine phosphate + CO2 + diphosphate. The catalysed reaction is 2-(2-carboxy-4-methylthiazol-5-yl)ethyl phosphate + 4-amino-2-methyl-5-(diphosphooxymethyl)pyrimidine + 2 H(+) = thiamine phosphate + CO2 + diphosphate. The enzyme catalyses 4-methyl-5-(2-phosphooxyethyl)-thiazole + 4-amino-2-methyl-5-(diphosphooxymethyl)pyrimidine + H(+) = thiamine phosphate + diphosphate. It participates in cofactor biosynthesis; thiamine diphosphate biosynthesis; thiamine phosphate from 4-amino-2-methyl-5-diphosphomethylpyrimidine and 4-methyl-5-(2-phosphoethyl)-thiazole: step 1/1. Functionally, condenses 4-methyl-5-(beta-hydroxyethyl)thiazole monophosphate (THZ-P) and 2-methyl-4-amino-5-hydroxymethyl pyrimidine pyrophosphate (HMP-PP) to form thiamine monophosphate (TMP). In Xylella fastidiosa (strain 9a5c), this protein is Thiamine-phosphate synthase.